Consider the following 183-residue polypeptide: Orotate phosphoribosyltransferase (183 aa).

5-phospho-alpha-D-ribose 1-diphosphate is bound by residues R21, K88, and E112 to S120. Residues T116 and R144 each contribute to the orotate site.

The protein belongs to the purine/pyrimidine phosphoribosyltransferase family. PyrE subfamily. In terms of assembly, homodimer. The cofactor is Mg(2+).

The catalysed reaction is orotidine 5'-phosphate + diphosphate = orotate + 5-phospho-alpha-D-ribose 1-diphosphate. The protein operates within pyrimidine metabolism; UMP biosynthesis via de novo pathway; UMP from orotate: step 1/2. Its function is as follows. Catalyzes the transfer of a ribosyl phosphate group from 5-phosphoribose 1-diphosphate to orotate, leading to the formation of orotidine monophosphate (OMP). The polypeptide is Orotate phosphoribosyltransferase (Thermus thermophilus (strain ATCC BAA-163 / DSM 7039 / HB27)).